Here is a 144-residue protein sequence, read N- to C-terminus: MRLNTLSPAEGAKHAPKRVGRGIGSGLGKTAGRGHKGQNSRSGGGVRRGFEGGQMPLYRRLPKFGFTSRKAMITAEVRLSELALVEGDVIDLNTLKAANVVGIQMEFVKVILSGEVNRAVTLRGLRVTKGARAAIEAAGGKIEE.

The interval 1 to 52 (MRLNTLSPAEGAKHAPKRVGRGIGSGLGKTAGRGHKGQNSRSGGGVRRGFEG) is disordered. The segment covering 21 to 31 (RGIGSGLGKTA) has biased composition (gly residues).

The protein belongs to the universal ribosomal protein uL15 family. Part of the 50S ribosomal subunit.

Functionally, binds to the 23S rRNA. In Yersinia pseudotuberculosis serotype O:1b (strain IP 31758), this protein is Large ribosomal subunit protein uL15.